We begin with the raw amino-acid sequence, 176 residues long: Urease accessory protein UreE (176 aa).

Belongs to the UreE family.

It localises to the cytoplasm. Functionally, involved in urease metallocenter assembly. Binds nickel. Probably functions as a nickel donor during metallocenter assembly. The chain is Urease accessory protein UreE from Helicobacter bizzozeronii.